A 420-amino-acid chain; its full sequence is uncharacterized protein (420 aa).

An N-terminal signal peptide occupies residues 1–25; that stretch reads MRYAMNKIPALLLVGALIIATVASG. N-acetylcysteine is present on Cys26. The S-archaeol cysteine moiety is linked to residue Cys26.

Belongs to the bacterial solute-binding protein 1 family.

The protein resides in the cell membrane. Probably part of a binding-protein-dependent transport system PH1036/38/39. This is an uncharacterized protein from Pyrococcus horikoshii (strain ATCC 700860 / DSM 12428 / JCM 9974 / NBRC 100139 / OT-3).